The following is a 76-amino-acid chain: Kappa-actitoxin-Avd4n (76 aa).

A signal peptide spans 1–19; the sequence is MNKAFFLCLVVLCAAVVFA. A propeptide spanning residues 20–31 is cleaved from the precursor; sequence AEDLQKGKHAPF. 2 cysteine pairs are disulfide-bonded: Cys37-Cys72 and Cys39-Cys65.

This sequence belongs to the sea anemone type 3 (BDS) potassium channel toxin family. Lacks the conventional Cys residue at position 55. Thus, only 2 disulfide are possible present. As to expression, experimental results show no expression in the ectodermal tissue from the distal and proximal tentacles, body wall, and oral disk. Since paralogs are expressed in this tissue, an expression of this toxin in this tissue is probable. The negative results could be explained by the very low abundance of EST sequences.

It localises to the secreted. Its subcellular location is the nematocyst. Functionally, blocks Kv3 voltage-gated potassium channels. Reduces blood pressure. This is Kappa-actitoxin-Avd4n from Anemonia viridis (Snakelocks anemone).